The primary structure comprises 196 residues: Glycerol-3-phosphate acyltransferase (196 aa).

A run of 5 helical transmembrane segments spans residues 1–21 (MIIL…GYLT), 53–73 (AITA…GSLL), 78–98 (GALV…FLKF), 112–132 (IMTS…VMLI), and 152–172 (LLFG…VMIF).

Belongs to the PlsY family. Probably interacts with PlsX.

The protein localises to the cell membrane. The catalysed reaction is an acyl phosphate + sn-glycerol 3-phosphate = a 1-acyl-sn-glycero-3-phosphate + phosphate. The protein operates within lipid metabolism; phospholipid metabolism. In terms of biological role, catalyzes the transfer of an acyl group from acyl-phosphate (acyl-PO(4)) to glycerol-3-phosphate (G3P) to form lysophosphatidic acid (LPA). This enzyme utilizes acyl-phosphate as fatty acyl donor, but not acyl-CoA or acyl-ACP. This Carboxydothermus hydrogenoformans (strain ATCC BAA-161 / DSM 6008 / Z-2901) protein is Glycerol-3-phosphate acyltransferase.